We begin with the raw amino-acid sequence, 432 residues long: Transcriptional adapter 3 (432 aa).

Lys-21 is covalently cross-linked (Glycyl lysine isopeptide (Lys-Gly) (interchain with G-Cter in SUMO2)). Positions 40–69 (IEELDTLQLELETLLSSASRRLRVLEAETQ) form a coiled coil. The disordered stretch occupies residues 87–127 (ARDHELGAPPKHGKPKKQKLEGKTGHGPGPGPGRPKSKNVQ). Residue Lys-129 forms a Glycyl lysine isopeptide (Lys-Gly) (interchain with G-Cter in SUMO2) linkage. A disordered region spans residues 272-319 (NIISPMEDSPIPDMSGKESGADGASTSPRNQNKPFSVPHTKSLESRIK). A phosphoserine mark is found at Ser-280 and Ser-298. Residues 295–305 (ASTSPRNQNKP) show a composition bias toward polar residues. A coiled-coil region spans residues 367–407 (LLRLAKEEVSRQELRQRVRMADNEVMDAFRKIMAARQKKRT). Residue Lys-418 is modified to N6-acetyllysine.

Belongs to the NGG1 family. The PCAF complex is composed of a number of TBP-associated factors (TAFS), such as TAF5, TAF5L, TAF6, TAF6L, TAF9, TAF10 and TAF12, PCAF, and also PCAF-associated factors (PAFs), such as TADA2L/ADA2, TADA3L/ADA3 and SPT3. Interacts directly with TADA2L and PCAF and also with the high-risk HPV oncoprotein E6. Component of the STAGA transcription coactivator-HAT complex, at least composed of SUPT3H, GCN5L2, TAF5L, TAF6L, SUPT7L, TADA3L, TAD1L, TAF10, TAF12, TRRAP and TAF9. Component of the TFTC-HAT complex. Component of the ADA2A-containing complex (ATAC), composed of KAT14, KAT2A, TADA2L, TADA3L, ZZ3, MBIP, WDR5, YEATS2, CCDC101 and DR1.

It localises to the nucleus. Functions as a component of the PCAF complex. The PCAF complex is capable of efficiently acetylating histones in a nucleosomal context. The PCAF complex could be considered as the human version of the yeast SAGA complex. Also known as a coactivator for p53/TP53-dependent transcriptional activation. Component of the ATAC complex, a complex with histone acetyltransferase activity on histones H3 and H4. The chain is Transcriptional adapter 3 (Tada3) from Rattus norvegicus (Rat).